Reading from the N-terminus, the 317-residue chain is Putative toluene-4-sulfonate monooxygenase system reductase subunit TsaB2 (317 aa).

Residues 4 to 106 enclose the FAD-binding FR-type domain; the sequence is DVPVTVAAVR…SAPRNLFEMA (103 aa). Residue 110 to 220 participates in NAD(+) binding; it reads RRVLLLAGGI…PGSVRMERFK (111 aa). One can recognise a 2Fe-2S ferredoxin-type domain in the interval 232 to 317; that stretch reads FELVLQRAGL…CGGGRLVLDI (86 aa). Residues Cys-266, Cys-271, and Cys-274 each contribute to the [2Fe-2S] cluster site.

In terms of assembly, monomer. Part of the p-toluenesulfonate methyl-monooxygenase complex TsaBM, comprising the reductase TsaB and the oxygenase TsaM. It depends on FMN as a cofactor.

Functionally, involved in the toluene-4-sulfonate degradation pathway. This Comamonas testosteroni (Pseudomonas testosteroni) protein is Putative toluene-4-sulfonate monooxygenase system reductase subunit TsaB2 (tsaB2).